Reading from the N-terminus, the 809-residue chain is TPR repeat-containing protein TP_0920 (809 aa).

Positions 103 to 125 (PGEARALPNSEQPEVPASLDSTS) are disordered. 9 TPR repeats span residues 315-348 (LREY…DPHC), 383-416 (AFLS…DPHQ), 418-450 (LFAL…FLAQ), 471-504 (TEVR…GSAD), 513-550 (LLLR…APDC), 552-582 (LYHF…DPDN), 583-616 (GWLH…LPHE), 656-689 (GQAF…EPQN), and 723-756 (AHVY…WPQC).

The polypeptide is TPR repeat-containing protein TP_0920 (Treponema pallidum (strain Nichols)).